The chain runs to 82 residues: Leucinostatins biosynthesis cluster protein M (82 aa).

The segment at 34 to 82 (ARNETHDPSGPRAPVSSMRLGPRSRPYHHGTARLRGSPNCSRDSSSAAT) is disordered. Polar residues predominate over residues 71–82 (PNCSRDSSSAAT).

Its function is as follows. Part of the gene cluster that mediates the biosynthesis of the lipopeptide antibiotics leucinostatins that show extensive biological activities, including antimalarial, antiviral, antibacterial, antifungal, and antitumor activities, as well as phytotoxic. The function of lcsM within the leucinostatins biosynthesis has not been identified yet. This is Leucinostatins biosynthesis cluster protein M from Purpureocillium lilacinum (Paecilomyces lilacinus).